Consider the following 158-residue polypeptide: Ribonuclease H (158 aa).

The region spanning 1-147 is the RNase H type-1 domain; the sequence is MKVTIYTDGA…CDVLATTAAD (147 aa). D8, E52, D74, and D139 together coordinate Mg(2+).

The protein belongs to the RNase H family. As to quaternary structure, monomer. Mg(2+) serves as cofactor.

It is found in the cytoplasm. It catalyses the reaction Endonucleolytic cleavage to 5'-phosphomonoester.. Endonuclease that specifically degrades the RNA of RNA-DNA hybrids. The protein is Ribonuclease H of Lachnoclostridium phytofermentans (strain ATCC 700394 / DSM 18823 / ISDg) (Clostridium phytofermentans).